The following is a 126-amino-acid chain: Small ribosomal subunit protein uS13c (126 aa).

Residues 100–126 (GQRTRTNARTRRGARQTVAGKKKAPSK) are disordered. Positions 101–126 (QRTRTNARTRRGARQTVAGKKKAPSK) are enriched in basic residues.

This sequence belongs to the universal ribosomal protein uS13 family. As to quaternary structure, part of the 30S ribosomal subunit.

The protein localises to the plastid. It localises to the cyanelle. In terms of biological role, located at the top of the head of the 30S subunit, it contacts several helices of the 16S rRNA. The chain is Small ribosomal subunit protein uS13c from Cyanophora paradoxa.